Consider the following 254-residue polypeptide: GPI alpha-1,4-mannosyltransferase I, stabilizing subunit (254 aa).

The first 22 residues, 1–22 (MAAGAVAWLLLWAAWLVGRLAA), serve as a signal peptide directing secretion. Topologically, residues 23-226 (DFSDAPFSAG…PVGLTIHTSL (204 aa)) are lumenal. N-linked (GlcNAc...) asparagine glycosylation occurs at N211. Residues 227 to 247 (VCSVTLLITILCSTLILLAVF) form a helical membrane-spanning segment. Over 248-254 (KYGHFSL) the chain is Cytoplasmic.

This sequence belongs to the PIGX family. Part of the glycosylphosphatidylinositol-mannosyltransferase I complex that is composed of PIGM and PIGX. Interacts with PIGM; PIGX stabilizes PIGM.

The protein resides in the endoplasmic reticulum membrane. It functions in the pathway glycolipid biosynthesis; glycosylphosphatidylinositol-anchor biosynthesis. Stabilizing subunit of the glycosylphosphatidylinositol-mannosyltransferase I complex which catalyzes the transfer of the first mannose, via an alpha-1,4 bond from a dolichol-phosphate-mannose (Dol-P-Man) to the glucosaminyl acyl phosphatidylinositol (GlcN-(acyl)PI) intermediate to generate alpha-D-Man-(1-&gt;4)-alpha-D-GlcN-(1-&gt;6)-(1-radyl,2-acyl-sn-glycero-3-phospho)-2-acyl-inositol and participates in the sixth step of the glycosylphosphatidylinositol-anchor biosynthesis. Probably acts by stabilizing the mannosyltransferase PIGM. The sequence is that of GPI alpha-1,4-mannosyltransferase I, stabilizing subunit from Mus musculus (Mouse).